The primary structure comprises 966 residues: Valine--tRNA ligase (966 aa).

The 'HIGH' region signature appears at 48 to 58; that stretch reads PNITGGLHLGH. Residues 348-368 are a coiled coil; that stretch reads DYKDARKKIIEECKRLKILED. Residues 566 to 570 carry the 'KMSKS' region motif; the sequence is KMSKS. Lys569 lines the ATP pocket. Residues 939–960 adopt a coiled-coil conformation; it reads FKKSQEKLNHYNKTKNKLLNQY.

Belongs to the class-I aminoacyl-tRNA synthetase family. ValS type 1 subfamily. In terms of assembly, monomer.

The protein localises to the cytoplasm. The enzyme catalyses tRNA(Val) + L-valine + ATP = L-valyl-tRNA(Val) + AMP + diphosphate. In terms of biological role, catalyzes the attachment of valine to tRNA(Val). As ValRS can inadvertently accommodate and process structurally similar amino acids such as threonine, to avoid such errors, it has a 'posttransfer' editing activity that hydrolyzes mischarged Thr-tRNA(Val) in a tRNA-dependent manner. The protein is Valine--tRNA ligase of Blochmanniella floridana.